A 667-amino-acid chain; its full sequence is Coiled-coil domain-containing protein 154 (667 aa).

4 coiled-coil regions span residues 76–182 (VVEL…QEAG), 215–302 (RRVD…GQHE), 384–410 (LLRE…SGHL), and 457–521 (LRGV…KEDN).

Its subcellular location is the early endosome. The sequence is that of Coiled-coil domain-containing protein 154 from Homo sapiens (Human).